Here is a 369-residue protein sequence, read N- to C-terminus: 3-dehydroquinate synthase (369 aa).

Residues 78–83, 112–116, 136–137, lysine 149, lysine 158, and 176–179 contribute to the NAD(+) site; these read DGERYK, GVIGD, TT, and TLTT. Positions 191, 254, and 271 each coordinate Zn(2+).

The protein belongs to the sugar phosphate cyclases superfamily. Dehydroquinate synthase family. NAD(+) is required as a cofactor. Requires Co(2+) as cofactor. Zn(2+) serves as cofactor.

Its subcellular location is the cytoplasm. The enzyme catalyses 7-phospho-2-dehydro-3-deoxy-D-arabino-heptonate = 3-dehydroquinate + phosphate. It participates in metabolic intermediate biosynthesis; chorismate biosynthesis; chorismate from D-erythrose 4-phosphate and phosphoenolpyruvate: step 2/7. Catalyzes the conversion of 3-deoxy-D-arabino-heptulosonate 7-phosphate (DAHP) to dehydroquinate (DHQ). This Nitrosomonas europaea (strain ATCC 19718 / CIP 103999 / KCTC 2705 / NBRC 14298) protein is 3-dehydroquinate synthase.